A 795-amino-acid chain; its full sequence is METKVRKKMYKKGKFWVVATITTAMLTGIGLSSVQADEANSTQVSSELAERSQVQENTTASSSAAENQDKTEVKETPSTNPAAATVENTDQTTKVITDNAAVESKASKTKDQAATVTKTSASTPEVGQTNEKAKATKEADITTPKNTIDEYGLTEQARKIATEAGINLSSLTQKQVEALNKVKLTSDAQTGHQMTYQEFDKIAQTLIAQDERYAIPYFNAKAIKNMKAATTRDAQTGQIADLDVWDSWPVQDAKTGEVINWNGYQLVVAMMGIPNTNDNHIYLLYNKYGDNNFDHWKNAGSIFGYNETPLTQEWSGSATVNEDGSLQLFYTKVDTSDKNSNNQRLATATVNLGFDDQDVRILSVENDKVLTPEGGDGYHYQSYQQWRSTFTGADNIAMRDPHVIEDENGDRYLVFEASTGTENYQGEDQIYNFTNYGGSSAYNVKSLFRFLDDQDMYNRASWANAAIGILKLKGDKKTPEVDQFYTPLLSSTMVSDELERPNVVKLGDKYYLFTASRLNHGSNNDAWNKANEVVGDNVVMLGYVSDQLTNGYKPLNNSGVVLTASVPADWRTATYSYYAVPVAGSSDTLLMTAYMTNRNEVAGKGKNSTWAPSFLIQVLPDGTTKVLAEMTQQGDWIWDESSRTTDTVGTLDTAYLPGENDGYIDWNVIGGYGLKPHTPGQYQPTVPSTPIHTDDIISFEVSFDGHLVIKPVKVNNDSAGRIDQSRNSGGSLNVAFNVYAGGNISVKPSQKSINNTKETKKAHHVSTEKKQKKGNSFFAALLALFSAFCVSIGFK.

The signal sequence occupies residues 1–36; it reads METKVRKKMYKKGKFWVVATITTAMLTGIGLSSVQA. Composition is skewed to polar residues over residues 42-66 and 112-130; these read TQVS…SAAE and QAAT…GQTN. 2 disordered regions span residues 42–83 and 103–138; these read TQVS…NPAA and ESKA…ATKE. Trp245, Asp246, and Ser315 together coordinate sucrose. The Nucleophile role is filled by Asp246. Asp394 lines the Ca(2+) pocket. Sucrose-binding residues include Arg399 and Asp400. 3 residues coordinate Ca(2+): Gln425, Asn464, and Asp496. Glu497 is a sucrose binding site. Glu499 serves as the catalytic Proton donor/acceptor. Arg517 lines the sucrose pocket. Residues 774 to 794 traverse the membrane as a helical segment; it reads GNSFFAALLALFSAFCVSIGF.

Belongs to the glycosyl hydrolase 68 family.

The protein localises to the cell membrane. The protein resides in the cell surface. The enzyme catalyses [6)-beta-D-fructofuranosyl-(2-&gt;](n) alpha-D-glucopyranoside + sucrose = [6)-beta-D-fructofuranosyl-(2-&gt;](n+1) alpha-D-glucopyranoside + D-glucose. Ca(2+) may play an important structural role and promote stability of levansucrase. In terms of biological role, catalyzes the synthesis of levan, a fructose polymer, by transferring the fructosyl moiety from sucrose to a growing acceptor molecule. Also displays sucrose hydrolase activity. The sequence is that of Levansucrase from Streptococcus mutans serotype c (strain ATCC 700610 / UA159).